We begin with the raw amino-acid sequence, 270 residues long: Metallo-beta-lactamase type 2 (270 aa).

An N-terminal signal peptide occupies residues 1 to 28; the sequence is MELPNIMHPVAKLSTALAAALMLSGCMP. Residues His-120, His-122, Asp-124, His-189, and Cys-208 each coordinate Zn(2+). Substrate-binding residues include Lys-211 and Asn-220. His-250 contacts Zn(2+).

The protein belongs to the metallo-beta-lactamase superfamily. Class-B beta-lactamase family. As to quaternary structure, monomer. It depends on Zn(2+) as a cofactor.

The protein localises to the periplasm. It carries out the reaction a beta-lactam + H2O = a substituted beta-amino acid. Inhibits by captopril, thiorphan, dimercaprol and tiopronin. This enzyme is not susceptible to inactivation by the beta-lactamase-blocking agents clavulanic acid. In terms of biological role, confers resistance to the different beta-lactams antibiotics (penicillin, cephalosporin and carbapenem) via the hydrolysis of the beta-lactam ring. Does not confer resistance to the polymixin colistin or the fluoroquinolone ciprofloxacin. This chain is Metallo-beta-lactamase type 2, found in Klebsiella pneumoniae.